Consider the following 249-residue polypeptide: Acetylglutamate kinase (249 aa).

Residues 38-39 (GG), arginine 60, and asparagine 147 each bind substrate.

This sequence belongs to the acetylglutamate kinase family. ArgB subfamily.

It localises to the cytoplasm. It carries out the reaction N-acetyl-L-glutamate + ATP = N-acetyl-L-glutamyl 5-phosphate + ADP. Its pathway is amino-acid biosynthesis; L-arginine biosynthesis; N(2)-acetyl-L-ornithine from L-glutamate: step 2/4. Catalyzes the ATP-dependent phosphorylation of N-acetyl-L-glutamate. This Deinococcus radiodurans (strain ATCC 13939 / DSM 20539 / JCM 16871 / CCUG 27074 / LMG 4051 / NBRC 15346 / NCIMB 9279 / VKM B-1422 / R1) protein is Acetylglutamate kinase.